Consider the following 959-residue polypeptide: Outer capsid protein VP2 (959 aa).

The protein belongs to the orbivirus VP2 family.

It localises to the virion. The VP2 protein is one of the two proteins (with VP5) which constitute the virus particle outer capsid. It is the major target of the host immunogenic response. Responsible for viral attachment to target host cell, probably by binding to sialic acid. This attachment induces virion internalization predominantly through clathrin-dependent endocytosis. The protein is Outer capsid protein VP2 (Segment-2) of Antilocapra americana (Pronghorn).